The sequence spans 460 residues: ATP synthase subunit beta 1 (460 aa).

149-156 (GGAGVGKT) is an ATP binding site.

It belongs to the ATPase alpha/beta chains family. In terms of assembly, F-type ATPases have 2 components, CF(1) - the catalytic core - and CF(0) - the membrane proton channel. CF(1) has five subunits: alpha(3), beta(3), gamma(1), delta(1), epsilon(1). CF(0) has three main subunits: a(1), b(2) and c(9-12). The alpha and beta chains form an alternating ring which encloses part of the gamma chain. CF(1) is attached to CF(0) by a central stalk formed by the gamma and epsilon chains, while a peripheral stalk is formed by the delta and b chains.

It localises to the cell inner membrane. It catalyses the reaction ATP + H2O + 4 H(+)(in) = ADP + phosphate + 5 H(+)(out). Functionally, produces ATP from ADP in the presence of a proton gradient across the membrane. The catalytic sites are hosted primarily by the beta subunits. This chain is ATP synthase subunit beta 1, found in Nitrosomonas eutropha (strain DSM 101675 / C91 / Nm57).